A 165-amino-acid polypeptide reads, in one-letter code: Small ribosomal subunit protein uS5 (165 aa).

The S5 DRBM domain occupies 10–73 (QIEKLISLNR…TSARKNLRFV (64 aa)).

The protein belongs to the universal ribosomal protein uS5 family. As to quaternary structure, part of the 30S ribosomal subunit. Contacts proteins S4 and S8.

Functionally, with S4 and S12 plays an important role in translational accuracy. Located at the back of the 30S subunit body where it stabilizes the conformation of the head with respect to the body. The protein is Small ribosomal subunit protein uS5 of Borreliella afzelii (strain PKo) (Borrelia afzelii).